The sequence spans 382 residues: Gibberellin 2-beta-dioxygenase 1 (382 aa).

Residues 189–321 (DSDCLLRINH…RLSTIYFASP (133 aa)) form the Fe2OG dioxygenase domain. Y199 serves as a coordination point for 2-oxoglutarate. Fe cation is bound by residues H241, D243, and H302. 2 residues coordinate 2-oxoglutarate: R312 and S314.

It belongs to the iron/ascorbate-dependent oxidoreductase family. GA2OX subfamily. Requires L-ascorbate as cofactor. Fe(2+) is required as a cofactor. Expressed in roots, shoot apex, and in the basal region of leaf primordia and young leaves.

It catalyses the reaction gibberellin A1 + 2-oxoglutarate + O2 = gibberellin A8 + succinate + CO2. Functionally, catalyzes the 2-beta-hydroxylation of several biologically active gibberellins, leading to the homeostatic regulation of their endogenous level. Catabolism of gibberellins (GAs) plays a central role in plant development. Controls the level of bioactive GAs in the shoot apical meristem, which regulates the vegetative to reproductive phase transition. In vitro, converts GA1, GA4, GA9, GA20, and GA44 to the corresponding 2-beta-hydroxylated products GA8, GA34, GA51, GA29, and GA98, respectively. This chain is Gibberellin 2-beta-dioxygenase 1, found in Oryza sativa subsp. japonica (Rice).